Consider the following 147-residue polypeptide: MKSYFYDNESDVISLDYLKEHNVLYFPMDREKENYKEPLETLCKERGYKNRDEVKLSKETPGLEDKLKIFFEEHLHDDEEIRFILDGCGFFDIRDKNDKWVKIKEKKGDLIIVPANMYHRFALDESRNIHAMRLFTDAPKWVPINRY.

The Fe(2+) site is built by His-74, His-76, Glu-80, and His-119. Residues His-74, His-76, Glu-80, and His-119 each coordinate Ni(2+).

This sequence belongs to the acireductone dioxygenase (ARD) family. It depends on Fe(2+) as a cofactor. Requires Ni(2+) as cofactor.

The protein localises to the cytoplasm. Its subcellular location is the nucleus. The catalysed reaction is 1,2-dihydroxy-5-(methylsulfanyl)pent-1-en-3-one + O2 = 4-methylsulfanyl-2-oxobutanoate + formate + 2 H(+). It carries out the reaction 1,2-dihydroxy-5-(methylsulfanyl)pent-1-en-3-one + O2 = 3-(methylsulfanyl)propanoate + CO + formate + 2 H(+). The protein operates within amino-acid biosynthesis; L-methionine biosynthesis via salvage pathway; L-methionine from S-methyl-5-thio-alpha-D-ribose 1-phosphate: step 5/6. Its function is as follows. Catalyzes 2 different reactions between oxygen and the acireductone 1,2-dihydroxy-3-keto-5-methylthiopentene (DHK-MTPene) depending upon the metal bound in the active site. Fe-containing acireductone dioxygenase (Fe-ARD) produces formate and 2-keto-4-methylthiobutyrate (KMTB), the alpha-ketoacid precursor of methionine in the methionine recycle pathway. Ni-containing acireductone dioxygenase (Ni-ARD) produces methylthiopropionate, carbon monoxide and formate, and does not lie on the methionine recycle pathway. The chain is Acireductone dioxygenase (adi1) from Dictyostelium discoideum (Social amoeba).